We begin with the raw amino-acid sequence, 1239 residues long: Anion exchange protein 2 (1239 aa).

The segment at 1–237 (MSSAPRRPAK…HRSYNLQERR (237 aa)) is disordered. The Cytoplasmic segment spans residues 1-706 (MSSAPRRPAK…DFRDALDPQC (706 aa)). Composition is skewed to basic and acidic residues over residues 37-49 (ELHR…RFEE) and 58-75 (GGEE…EYHR). Basic residues-rich tracts occupy residues 76 to 85 (QSSHHIHHPL) and 94 to 110 (RRRK…RRRP). Residues Ser-113, Ser-132, Ser-144, Ser-170, and Ser-172 each carry the phosphoserine modification. The span at 120–133 (TIEEGEEDEDEASE) shows a compositional bias: acidic residues. Low complexity predominate over residues 141–155 (TQPSPVSTPSSVQFF). Residues 189–207 (GAQAGTQVEEAEAVAVASG) are compositionally biased toward low complexity. A compositionally biased stretch (gly residues) spans 208–217 (TAGGDDGGAS). Ser-241 bears the Phosphoserine mark. Phosphothreonine is present on Thr-255. Lys-272 bears the N6-methyllysine mark. The disordered stretch occupies residues 285-318 (HLVRKNAKGSTQSGREGREPGPTPRARPRAPHKP). At Ser-441 the chain carries Phosphoserine. The tract at residues 447–468 (SLLGHHHGQGAESDPHVTEPLI) is disordered. Membrane (anion exchange) stretches follow at residues 706 to 1239 (CLAA…PMPV) and 708 to 1239 (AAVI…PMPV). The next 4 membrane-spanning stretches (helical) occupy residues 707–727 (LAAV…FGGL), 752–772 (FCLL…LLVF), 794–814 (IGFW…SFLV), and 824–844 (IFAF…LVKI). At 845 to 895 (FQEHPLHGCSASNSSEVDGGENMTWAVARPTLGPGNRSLAGQSGQGKPRGQ) the chain is on the extracellular side. 3 N-linked (GlcNAc...) asparagine glycosylation sites follow: Asn-857, Asn-866, and Asn-880. A helical transmembrane segment spans residues 896 to 916 (PNTALLSLVLMAGTFFIAFFL). At 917–931 (RKFKNSRFFPGRIRR) the chain is on the cytoplasmic side. 5 helical membrane-spanning segments follow: residues 932–952 (VIGD…DYSI), 987–1007 (FPVW…ILIF), 1034–1054 (LLLI…WLAA), 1088–1108 (RVTG…GDLL), and 1111–1131 (IPLA…LNGI). Cys-1171 carries S-palmitoyl cysteine lipidation. The helical transmembrane segment at 1172-1192 (LALLWAVMSTAASLAFPFILI) threads the bilayer.

The protein belongs to the anion exchanger (TC 2.A.31) family.

It localises to the apical cell membrane. It is found in the basolateral cell membrane. It catalyses the reaction hydrogencarbonate(in) + chloride(out) = hydrogencarbonate(out) + chloride(in). In terms of biological role, sodium-independent anion exchanger which mediates the electroneutral exchange of chloride for bicarbonate ions across the cell membrane. Plays an important role in osteoclast differentiation and function. Regulates bone resorption and calpain-dependent actin cytoskeleton organization in osteoclasts via anion exchange-dependent control of pH. Essential for intracellular pH regulation in CD8(+) T-cells upon CD3 stimulation, modulating CD8(+) T-cell response. The chain is Anion exchange protein 2 (SLC4A2) from Pongo abelii (Sumatran orangutan).